A 205-amino-acid chain; its full sequence is Proteasome subunit beta type-3 (205 aa).

It belongs to the peptidase T1B family. As to quaternary structure, the 26S proteasome consists of a 20S proteasome core and two 19S regulatory subunits. The 20S proteasome core is composed of 28 subunits that are arranged in four stacked rings, resulting in a barrel-shaped structure. The two end rings are each formed by seven alpha subunits, and the two central rings are each formed by seven beta subunits. The catalytic chamber with the active sites is on the inside of the barrel.

It localises to the cytoplasm. It is found in the nucleus. Functionally, non-catalytic component of the proteasome, a multicatalytic proteinase complex which is characterized by its ability to cleave peptides with Arg, Phe, Tyr, Leu, and Glu adjacent to the leaving group at neutral or slightly basic pH. The proteasome has an ATP-dependent proteolytic activity. This chain is Proteasome subunit beta type-3 (psmb3), found in Oncorhynchus mykiss (Rainbow trout).